Here is a 528-residue protein sequence, read N- to C-terminus: Phosphoenolpyruvate carboxykinase (ATP) (528 aa).

Residues Arg56, Tyr192, and Lys198 each coordinate substrate. Residues Lys198, His217, and 233 to 241 (GLSGTGKTT) contribute to the ATP site. Residues Lys198 and His217 each coordinate Mn(2+). Residue Asp254 participates in Mn(2+) binding. ATP-binding residues include Glu282, Arg319, and Thr444. Arg319 lines the substrate pocket.

The protein belongs to the phosphoenolpyruvate carboxykinase (ATP) family. The cofactor is Mn(2+).

It localises to the cytoplasm. The catalysed reaction is oxaloacetate + ATP = phosphoenolpyruvate + ADP + CO2. It participates in carbohydrate biosynthesis; gluconeogenesis. Involved in the gluconeogenesis. Catalyzes the conversion of oxaloacetate (OAA) to phosphoenolpyruvate (PEP) through direct phosphoryl transfer between the nucleoside triphosphate and OAA. The chain is Phosphoenolpyruvate carboxykinase (ATP) from Bacillus cereus (strain 03BB102).